A 208-amino-acid polypeptide reads, in one-letter code: Uracil phosphoribosyltransferase (208 aa).

5-phospho-alpha-D-ribose 1-diphosphate contacts are provided by residues Arg-78, Arg-103, and 130-138; that span reads DPMLATGGS. Uracil-binding positions include Ile-193 and 198–200; that span reads GDA. Asp-199 contributes to the 5-phospho-alpha-D-ribose 1-diphosphate binding site.

It belongs to the UPRTase family. Requires Mg(2+) as cofactor.

The catalysed reaction is UMP + diphosphate = 5-phospho-alpha-D-ribose 1-diphosphate + uracil. It participates in pyrimidine metabolism; UMP biosynthesis via salvage pathway; UMP from uracil: step 1/1. With respect to regulation, allosterically activated by GTP. Its function is as follows. Catalyzes the conversion of uracil and 5-phospho-alpha-D-ribose 1-diphosphate (PRPP) to UMP and diphosphate. This chain is Uracil phosphoribosyltransferase, found in Proteus mirabilis (strain HI4320).